Here is a 341-residue protein sequence, read N- to C-terminus: MRKDLIELDGSEGGGQILRSALSLSMTSGQPLRIRNIRGRRSRPGLLRQHLTAVRAAAEICAAEVEGAELGSRELAFRPGAIRAGDYAFAIGSAGSCSLVLQTLLPALLAANGESRVRISGGTHNPLAPPADFLRDSWLPLLQRMGAEVDLELLRHGFVPAGGGELLARVRPARWRPLQLEHPGAALRRQARALLAGIPGHVGERELERVRQRLGWSDEERQLEFLAEVQGPGNALLLRIDCEHICATFCAFGQAGVSAERVAEQVATQAIGWMESGCAADEHLADQLLLPMALAGAGSFTTPRLSAHLQSNRRVIERFLPVRIGDQALDGGGHRIVITSA.

ATP contacts are provided by residues Q102 and 283 to 287 (HLADQ). Residue H308 is the Tele-AMP-histidine intermediate of the active site.

The protein belongs to the RNA 3'-terminal cyclase family. Type 1 subfamily.

Its subcellular location is the cytoplasm. The catalysed reaction is a 3'-end 3'-phospho-ribonucleotide-RNA + ATP = a 3'-end 2',3'-cyclophospho-ribonucleotide-RNA + AMP + diphosphate. In terms of biological role, catalyzes the conversion of 3'-phosphate to a 2',3'-cyclic phosphodiester at the end of RNA. The mechanism of action of the enzyme occurs in 3 steps: (A) adenylation of the enzyme by ATP; (B) transfer of adenylate to an RNA-N3'P to produce RNA-N3'PP5'A; (C) and attack of the adjacent 2'-hydroxyl on the 3'-phosphorus in the diester linkage to produce the cyclic end product. The biological role of this enzyme is unknown but it is likely to function in some aspects of cellular RNA processing. The sequence is that of RNA 3'-terminal phosphate cyclase from Pseudomonas aeruginosa (strain LESB58).